Reading from the N-terminus, the 141-residue chain is Nucleoside diphosphate kinase (141 aa).

ATP-binding residues include lysine 11, phenylalanine 59, arginine 87, threonine 93, arginine 104, and asparagine 114. Catalysis depends on histidine 117, which acts as the Pros-phosphohistidine intermediate.

It belongs to the NDK family. In terms of assembly, homotetramer. Mg(2+) is required as a cofactor.

It is found in the cytoplasm. The enzyme catalyses a 2'-deoxyribonucleoside 5'-diphosphate + ATP = a 2'-deoxyribonucleoside 5'-triphosphate + ADP. It carries out the reaction a ribonucleoside 5'-diphosphate + ATP = a ribonucleoside 5'-triphosphate + ADP. Major role in the synthesis of nucleoside triphosphates other than ATP. The ATP gamma phosphate is transferred to the NDP beta phosphate via a ping-pong mechanism, using a phosphorylated active-site intermediate. This is Nucleoside diphosphate kinase from Variovorax paradoxus (strain S110).